A 303-amino-acid chain; its full sequence is Probable cell division protein WhiA (303 aa).

Residues 272-303 (SIQQLADSLSRPLTKSGVNHRLRKINKIADEL) constitute a DNA-binding region (H-T-H motif).

The protein belongs to the WhiA family.

Involved in cell division and chromosome segregation. In Streptococcus sanguinis (strain SK36), this protein is Probable cell division protein WhiA.